A 551-amino-acid chain; its full sequence is Protein GZF3 (551 aa).

The disordered stretch occupies residues Asp-17–Trp-43. The segment at Cys-131–Cys-155 adopts a GATA-type zinc-finger fold. Disordered stretches follow at residues Gly-212 to Lys-260, Leu-379 to Ser-400, and Ser-467 to Leu-490. Over residues Ser-228–Lys-239 the composition is skewed to polar residues. Residues Pro-244 to Ser-254 show a composition bias toward basic and acidic residues. Residues Asp-388–Ser-400 show a composition bias toward polar residues. Low complexity predominate over residues Ser-467–Val-477. Basic and acidic residues predominate over residues Ser-478–Leu-490.

The protein resides in the nucleus. The protein is Protein GZF3 (GZF3) of Saccharomyces cerevisiae (strain ATCC 204508 / S288c) (Baker's yeast).